A 368-amino-acid polypeptide reads, in one-letter code: Nicotinamide/nicotinic acid mononucleotide adenylyltransferase (368 aa).

The segment covering 1 to 14 (MHTMNGDNFANSFP) has biased composition (polar residues). The interval 1–25 (MHTMNGDNFANSFPKNPLLSRNSSS) is disordered. Phosphoserine is present on Ser-36. A disordered region spans residues 47–78 (AKEHEERIRRPSVNRAWQKNSTSGGPSVSLEK). Positions 61–72 (RAWQKNSTSGGP) are enriched in polar residues. 2 positions are modified to phosphoserine: Ser-75 and Ser-85. 2 residues coordinate NAD(+): Ser-135 and Phe-136. His-143 lines the ATP pocket. NAD(+) is bound by residues Thr-215, Gly-250, Asp-252, Trp-263, Arg-282, and Asn-313. 318 to 321 (TKVR) contacts ATP.

This sequence belongs to the eukaryotic NMN adenylyltransferase family. Requires a divalent metal cation as cofactor.

It is found in the cytoplasm. The protein resides in the nucleus. The catalysed reaction is beta-nicotinamide D-ribonucleotide + ATP + H(+) = diphosphate + NAD(+). The enzyme catalyses nicotinate beta-D-ribonucleotide + ATP + H(+) = deamido-NAD(+) + diphosphate. It functions in the pathway cofactor biosynthesis; NAD(+) biosynthesis; deamido-NAD(+) from nicotinate D-ribonucleotide: step 1/1. It participates in cofactor biosynthesis; NAD(+) biosynthesis; NAD(+) from nicotinamide D-ribonucleotide: step 1/1. Its function is as follows. Catalyzes the formation of NAD(+) from nicotinamide mononucleotide (NMN) and ATP. Can also use the deamidated form; nicotinic acid mononucleotide (NaMN) as substrate to form deamido-NAD(+) (NaAD). Key enzyme in both de novo and salvage pathways for NAD(+) biosynthesis. This chain is Nicotinamide/nicotinic acid mononucleotide adenylyltransferase, found in Schizosaccharomyces pombe (strain 972 / ATCC 24843) (Fission yeast).